A 352-amino-acid chain; its full sequence is 4-hydroxy-2-oxovalerate aldolase 5 (352 aa).

The 253-residue stretch at 9–261 folds into the Pyruvate carboxyltransferase domain; that stretch reads IRVTDSSLRD…RTGIDTLKII (253 aa). Substrate is bound at residue 17 to 18; that stretch reads RD. Residue Asp18 participates in Mn(2+) binding. The Proton acceptor role is filled by His21. The substrate site is built by Ser171 and His200. Mn(2+) contacts are provided by His200 and His202. Tyr291 serves as a coordination point for substrate.

It belongs to the 4-hydroxy-2-oxovalerate aldolase family.

The catalysed reaction is (S)-4-hydroxy-2-oxopentanoate = acetaldehyde + pyruvate. The protein is 4-hydroxy-2-oxovalerate aldolase 5 of Rhodococcus opacus (strain B4).